The chain runs to 1538 residues: Ferredoxin-dependent glutamate synthase (1538 aa).

C34 (for GATase activity) is an active-site residue. A Glutamine amidotransferase type-2 domain is found at 34–431 (CGVGFIADVN…PGQMISVDIF (398 aa)). An FMN-binding site is contributed by 1109 to 1166 (LSEVHQLLAENQLRDRVTLRVDGGLRTGSDIVLAAIMGAEEFGFGTVAMIATGCIMAR). [3Fe-4S] cluster-binding residues include C1162, C1168, and C1173.

It belongs to the glutamate synthase family. Monomer. [3Fe-4S] cluster is required as a cofactor. The cofactor is FAD. Requires FMN as cofactor.

Its subcellular location is the plastid. It is found in the chloroplast stroma. The enzyme catalyses 2 oxidized [2Fe-2S]-[ferredoxin] + 2 L-glutamate = L-glutamine + 2 reduced [2Fe-2S]-[ferredoxin] + 2-oxoglutarate + 2 H(+). The protein operates within amino-acid biosynthesis; L-glutamate biosynthesis via GLT pathway; L-glutamate from 2-oxoglutarate and L-glutamine (ferredoxin route): step 1/1. It functions in the pathway energy metabolism; nitrogen metabolism. This Pyropia yezoensis (Susabi-nori) protein is Ferredoxin-dependent glutamate synthase (gltB).